Reading from the N-terminus, the 590-residue chain is MRTTHIEDRDNNSLENKHTDHIEGVENGKGTQEPPSPSGFGGHLIDENLVHVEGEDKVTWYLCFLISASAIAGFLFGYDTGVVGVALPLVGTDLGGNELNSSQQEIITAGTTIGAIFGSAILGGWGDHLGRKMAILISDVFFTVGAVIIASSYSVPQIIVGRIVLGVGVGGAAVIAPLFITETAPTAVRGRCIGVNAFFIPFGQLVADSIGAGVQNMHGGWRLLFALGAVPSLIQLLLFHYLPESPRILIVKGDIDRARNVFQRIYPTATHEMVDYKLRVAQEYVAATTALQSGTTFWERVKKVWKTGSYRRSIIAVSVLQAAGQLCGFNTLLYYAGTLFGLLGLSNPALGGLIPAGTNAVFVLIGMSTVDKIGRRGLLLVGVPVLLLGLVWNIIGFYYMCKPTGGFLDTSYSYDTTNVGIVIGGIVFYVAGFGLTYSHLVWYQAEYLALEVRSMGSGVATTVCWIANLVVSVSYLSELETMTPSGTYGFYLGLSVIAFVFVVFCFPETKQLSIDETSLLFENDWGVKRSVQMRKERHETRKRFKDVELAEAATAHFEARQQKSASVSPAELSKFMAGLKGGKRKPQVLV.

Over residues 1–26 (MRTTHIEDRDNNSLENKHTDHIEGVE) the composition is skewed to basic and acidic residues. Residues 1-40 (MRTTHIEDRDNNSLENKHTDHIEGVENGKGTQEPPSPSGF) are disordered. Topologically, residues 1–57 (MRTTHIEDRDNNSLENKHTDHIEGVENGKGTQEPPSPSGFGGHLIDENLVHVEGEDK) are cytoplasmic. Residues 58–78 (VTWYLCFLISASAIAGFLFGY) traverse the membrane as a helical segment. The Extracellular portion of the chain corresponds to 79–105 (DTGVVGVALPLVGTDLGGNELNSSQQE). N-linked (GlcNAc...) asparagine glycosylation occurs at N100. The helical transmembrane segment at 106-126 (IITAGTTIGAIFGSAILGGWG) threads the bilayer. Topologically, residues 127 to 132 (DHLGRK) are cytoplasmic. Residues 133-153 (MAILISDVFFTVGAVIIASSY) traverse the membrane as a helical segment. At 154–157 (SVPQ) the chain is on the extracellular side. The chain crosses the membrane as a helical span at residues 158-178 (IIVGRIVLGVGVGGAAVIAPL). The Cytoplasmic portion of the chain corresponds to 179–192 (FITETAPTAVRGRC). The chain crosses the membrane as a helical span at residues 193–213 (IGVNAFFIPFGQLVADSIGAG). Over 214–222 (VQNMHGGWR) the chain is Extracellular. Residues 223–243 (LLFALGAVPSLIQLLLFHYLP) traverse the membrane as a helical segment. Residues 244-325 (ESPRILIVKG…AVSVLQAAGQ (82 aa)) are Cytoplasmic-facing. The helical transmembrane segment at 326 to 346 (LCGFNTLLYYAGTLFGLLGLS) threads the bilayer. The Extracellular portion of the chain corresponds to 347–349 (NPA). The helical transmembrane segment at 350–370 (LGGLIPAGTNAVFVLIGMSTV) threads the bilayer. The Cytoplasmic segment spans residues 371–376 (DKIGRR). The chain crosses the membrane as a helical span at residues 377 to 397 (GLLLVGVPVLLLGLVWNIIGF). Residues 398–420 (YYMCKPTGGFLDTSYSYDTTNVG) are Extracellular-facing. The helical transmembrane segment at 421 to 441 (IVIGGIVFYVAGFGLTYSHLV) threads the bilayer. At 442–455 (WYQAEYLALEVRSM) the chain is on the cytoplasmic side. Residues 456–476 (GSGVATTVCWIANLVVSVSYL) form a helical membrane-spanning segment. Topologically, residues 477–485 (SELETMTPS) are extracellular. The helical transmembrane segment at 486–506 (GTYGFYLGLSVIAFVFVVFCF) threads the bilayer. Over 507 to 590 (PETKQLSIDE…GGKRKPQVLV (84 aa)) the chain is Cytoplasmic.

The protein belongs to the major facilitator superfamily. Sugar transporter (TC 2.A.1.1) family.

It is found in the cell membrane. The enzyme catalyses myo-inositol(out) + H(+)(out) = myo-inositol(in) + H(+)(in). Functionally, transporter for myo-inositol. This chain is Myo-inositol transporter 3, found in Cryptococcus neoformans var. grubii serotype A (strain H99 / ATCC 208821 / CBS 10515 / FGSC 9487) (Filobasidiella neoformans var. grubii).